Reading from the N-terminus, the 25-residue chain is Aggression-stimulating peptide (25 aa).

Expressed by the skin glands of male frogs.

The protein resides in the secreted. In terms of biological role, stimulates aggressive behavior in male frogs. No effect on female frogs. This is Aggression-stimulating peptide from Leptodactylus fallax (Mountain chicken frog).